The chain runs to 443 residues: Ribulose bisphosphate carboxylase large chain (443 aa).

K7 bears the N6,N6,N6-trimethyllysine mark. Residues N116 and T166 each contribute to the substrate site. K168 serves as the catalytic Proton acceptor. K170 lines the substrate pocket. Residues K194, D196, and E197 each contribute to the Mg(2+) site. The residue at position 194 (K194) is an N6-carboxylysine. H287 serves as the catalytic Proton acceptor. 3 residues coordinate substrate: R288, H320, and S372.

The protein belongs to the RuBisCO large chain family. Type I subfamily. As to quaternary structure, heterohexadecamer of 8 large chains and 8 small chains; disulfide-linked. The disulfide link is formed within the large subunit homodimers. It depends on Mg(2+) as a cofactor. In terms of processing, the disulfide bond which can form in the large chain dimeric partners within the hexadecamer appears to be associated with oxidative stress and protein turnover.

The protein resides in the plastid. It localises to the chloroplast. The enzyme catalyses 2 (2R)-3-phosphoglycerate + 2 H(+) = D-ribulose 1,5-bisphosphate + CO2 + H2O. It carries out the reaction D-ribulose 1,5-bisphosphate + O2 = 2-phosphoglycolate + (2R)-3-phosphoglycerate + 2 H(+). Functionally, ruBisCO catalyzes two reactions: the carboxylation of D-ribulose 1,5-bisphosphate, the primary event in carbon dioxide fixation, as well as the oxidative fragmentation of the pentose substrate in the photorespiration process. Both reactions occur simultaneously and in competition at the same active site. The chain is Ribulose bisphosphate carboxylase large chain from Abies homolepis (Nikko fir).